A 181-amino-acid polypeptide reads, in one-letter code: RING-H2 finger protein ATL72 (181 aa).

A helical membrane pass occupies residues 34–54 (VIILAALLCALICALSLNSAL). An RING-type; atypical zinc finger spans residues 114–156 (CLICLGDFEDGEKVRVLPKCNHGFHVRCIDTWLLSRSSCPTCR).

Belongs to the RING-type zinc finger family. ATL subfamily.

It is found in the membrane. It catalyses the reaction S-ubiquitinyl-[E2 ubiquitin-conjugating enzyme]-L-cysteine + [acceptor protein]-L-lysine = [E2 ubiquitin-conjugating enzyme]-L-cysteine + N(6)-ubiquitinyl-[acceptor protein]-L-lysine.. It participates in protein modification; protein ubiquitination. The protein is RING-H2 finger protein ATL72 (ATL72) of Arabidopsis thaliana (Mouse-ear cress).